Reading from the N-terminus, the 275-residue chain is Phosphate import ATP-binding protein PstB 1 (275 aa).

The ABC transporter domain maps to 22-261; sequence FNVEGVKVYY…SPTEQMFNSP (240 aa). 54–61 provides a ligand contact to ATP; sequence GPSGCGKS.

It belongs to the ABC transporter superfamily. Phosphate importer (TC 3.A.1.7) family. In terms of assembly, the complex is composed of two ATP-binding proteins (PstB), two transmembrane proteins (PstC and PstA) and a solute-binding protein (PstS).

It localises to the cell inner membrane. It catalyses the reaction phosphate(out) + ATP + H2O = ADP + 2 phosphate(in) + H(+). Functionally, part of the ABC transporter complex PstSACB involved in phosphate import. Responsible for energy coupling to the transport system. In Trichormus variabilis (strain ATCC 29413 / PCC 7937) (Anabaena variabilis), this protein is Phosphate import ATP-binding protein PstB 1.